A 249-amino-acid chain; its full sequence is 2,3-bisphosphoglycerate-dependent phosphoglycerate mutase 2 (249 aa).

Substrate-binding positions include 8-15 (RHGESIWN), 21-22 (TG), Arg-60, 87-90 (ERHY), Lys-98, 114-115 (RR), and 183-184 (GN). His-9 acts as the Tele-phosphohistidine intermediate in catalysis. The Proton donor/acceptor role is filled by Glu-87.

This sequence belongs to the phosphoglycerate mutase family. BPG-dependent PGAM subfamily. In terms of assembly, homodimer.

The catalysed reaction is (2R)-2-phosphoglycerate = (2R)-3-phosphoglycerate. It participates in carbohydrate degradation; glycolysis; pyruvate from D-glyceraldehyde 3-phosphate: step 3/5. Catalyzes the interconversion of 2-phosphoglycerate and 3-phosphoglycerate. This Nitrosomonas europaea (strain ATCC 19718 / CIP 103999 / KCTC 2705 / NBRC 14298) protein is 2,3-bisphosphoglycerate-dependent phosphoglycerate mutase 2.